The following is a 259-amino-acid chain: MLTRRIIPCLDVRDGRTTKGIKFENNVDIGDPVEMAKVYYEAGADEIVFYDITASHEKRGLMIDVVRKVAETIFIPFSVGGGIRTVTDMRDTLLAGAEKISVNSSAVQNPAIISEGAEKFGSQCVVLGMDVKRVEKRKEIPSGFEIVINGGRTYMGIDALWWAREAQRLGAGEICLNSIDADGVCRGYDIELTRLISENVTIPVIASGGAGEPVHLHDALTEGRADAALIASMVHYGHHTIGGIKEYLDQRGVPVRMKW.

Active-site residues include D11 and D130.

Belongs to the HisA/HisF family. Heterodimer of HisH and HisF.

The protein resides in the cytoplasm. It catalyses the reaction 5-[(5-phospho-1-deoxy-D-ribulos-1-ylimino)methylamino]-1-(5-phospho-beta-D-ribosyl)imidazole-4-carboxamide + L-glutamine = D-erythro-1-(imidazol-4-yl)glycerol 3-phosphate + 5-amino-1-(5-phospho-beta-D-ribosyl)imidazole-4-carboxamide + L-glutamate + H(+). The protein operates within amino-acid biosynthesis; L-histidine biosynthesis; L-histidine from 5-phospho-alpha-D-ribose 1-diphosphate: step 5/9. In terms of biological role, IGPS catalyzes the conversion of PRFAR and glutamine to IGP, AICAR and glutamate. The HisF subunit catalyzes the cyclization activity that produces IGP and AICAR from PRFAR using the ammonia provided by the HisH subunit. The chain is Imidazole glycerol phosphate synthase subunit HisF from Desulfosudis oleivorans (strain DSM 6200 / JCM 39069 / Hxd3) (Desulfococcus oleovorans).